The chain runs to 568 residues: U6 small nuclear RNA (adenine-(43)-N(6))-methyltransferase (568 aa).

The disordered stretch occupies residues 1–20 (MSEIDTNDIKKEMDNKNYRD). Residues 7 to 20 (NDIKKEMDNKNYRD) show a composition bias toward basic and acidic residues. Residues Arg117, Gly151, Asp175, and Asn250 each coordinate S-adenosyl-L-methionine. 3 disordered regions span residues 363 to 383 (KENNNINNNNNNNNNNNINNN), 403 to 431 (NLDSDDNNNNNNNNNNNNNNNNNNNNNNN), and 503 to 538 (DPKINNNNNNNNNNNNNNNNNNNNNNNNNNNNNKNN). 3 stretches are compositionally biased toward low complexity: residues 365 to 383 (NNNINNNNNNNNNNNINNN), 409 to 431 (NNNNNNNNNNNNNNNNNNNNNNN), and 507 to 538 (NNNNNNNNNNNNNNNNNNNNNNNNNNNNNKNN).

It belongs to the methyltransferase superfamily. METTL16/RlmF family.

It carries out the reaction adenosine in U6 snRNA + S-adenosyl-L-methionine = N(6)-methyladenosine in U6 snRNA + S-adenosyl-L-homocysteine + H(+). In terms of biological role, RNA N6-methyltransferase that mediates N6-methylation of adenine of U6 small nuclear RNA (U6 snRNA). The protein is U6 small nuclear RNA (adenine-(43)-N(6))-methyltransferase of Dictyostelium discoideum (Social amoeba).